A 542-amino-acid polypeptide reads, in one-letter code: Putative beta-glucosidase 23 (542 aa).

Positions M1 to A29 are cleaved as a signal peptide. N-linked (GlcNAc...) asparagine glycosylation is present at N34. Q88 lines the a beta-D-glucoside pocket. A glycan (N-linked (GlcNAc...) asparagine) is linked at N135. Residue H216 coordinates a beta-D-glucoside. E262 acts as the Proton donor in catalysis. C281 and C289 form a disulfide bridge. Y405 contacts a beta-D-glucoside. N-linked (GlcNAc...) asparagine glycosylation occurs at N445. Positions 476 and 492 each coordinate a beta-D-glucoside.

It belongs to the glycosyl hydrolase 1 family.

It carries out the reaction Hydrolysis of terminal, non-reducing beta-D-glucosyl residues with release of beta-D-glucose.. This chain is Putative beta-glucosidase 23 (BGLU23), found in Oryza sativa subsp. japonica (Rice).